An 88-amino-acid polypeptide reads, in one-letter code: Small ribosomal subunit protein bS16c (88 aa).

Belongs to the bacterial ribosomal protein bS16 family.

It localises to the plastid. Its subcellular location is the chloroplast. This Coffea arabica (Arabian coffee) protein is Small ribosomal subunit protein bS16c.